The chain runs to 101 residues: MFDQTTNTEVHQLTVGKIETANGTIKPQLLRDAVKRAVTNFFSQLDGQEASEVYEMVLCEVEAPLLDIIMQHTRGNQTRAANMLGINRGTLRKKLKKYGMN.

Residues 77 to 96 (QTRAANMLGINRGTLRKKLK) constitute a DNA-binding region (H-T-H motif).

It belongs to the transcriptional regulatory Fis family. Homodimer.

Its function is as follows. Activates ribosomal RNA transcription. Plays a direct role in upstream activation of rRNA promoters. This Shewanella frigidimarina (strain NCIMB 400) protein is DNA-binding protein Fis.